Reading from the N-terminus, the 90-residue chain is MEKSRCHAVAHGGGCAGSAKSHKSGGRCGQGRGAGDSHGTRGAGRRYRAASAPHPLAVGAHLRDELAKRSADPRLTDELNDLAGHTLDDL.

The interval 1-56 (MEKSRCHAVAHGGGCAGSAKSHKSGGRCGQGRGAGDSHGTRGAGRRYRAASAPHPL) is disordered. Positions 26 to 36 (GRCGQGRGAGD) are enriched in gly residues.

Antitoxin component of a possible type II toxin-antitoxin (TA) system. The cognate toxin is VapC8. The sequence is that of Putative antitoxin VapB8 (vapB8) from Mycobacterium tuberculosis (strain ATCC 25618 / H37Rv).